Here is a 315-residue protein sequence, read N- to C-terminus: Zinc finger protein 691 (315 aa).

Over residues 1-10 (MSLCSPTHSA) the composition is skewed to polar residues. The segment at 1-90 (MSLCSPTHSA…QETHPKKPWQ (90 aa)) is disordered. Residues 33 to 58 (GSEKEQSPEPHLPEEGEGGKPWRVDD) show a composition bias toward basic and acidic residues. Phosphoserine occurs at positions 39, 75, and 77. A Glycyl lysine isopeptide (Lys-Gly) (interchain with G-Cter in SUMO2) cross-link involves residue Lys-113. 7 consecutive C2H2-type zinc fingers follow at residues 115-137 (FICA…QRIH), 143-165 (YKCS…ERIH), 171-193 (YKCP…QQDH), 199-221 (YRCD…HRTH), 227-249 (YICC…HRTH), 255-277 (YECT…QRTH), and 283-305 (YRCT…QKTH).

Belongs to the krueppel C2H2-type zinc-finger protein family.

Its subcellular location is the nucleus. May be involved in transcriptional regulation. This is Zinc finger protein 691 (ZNF691) from Homo sapiens (Human).